The following is a 636-amino-acid chain: MHISDITHPNQLHGLSIRQLEDVARQIREKHLQTIAATGGHLGPGLGVVELTIALYQTLDLDRDKVTWDVGHQAYPHKMLTGRYKNFHTLRQKDGIAGYLKRCESKFDHFGAGHASTSISAALGMALARDAQGEDYKVVAVIGDGALTGGMALEAINHAGHLPHTNLMVVLNDNEMSISPNVGAISRYLNKVRLSDPVQFLADNLEEQFKHLPFFGDSLSPEMERVKEGMKRLAVSKVGAVIEELGFKYFGPIDGHNLQELISTFKQAHKVTGPVLVHVATVKGKGYELAEKDQVGYHAQSPFNLATGKAIPSSKPKPPSYAKVFAHTLTTLAENNPKIIGITAAMATGTGLDKLQAKLPKQYIDVGIAEQHAVTLAGGLACEGMRPVVAIYSTFLQRAYDQVLHDVCIQNLPVFFCMDRAGIVGADGPTHQGMYDIAYLRCIPNMTIMAPKDEAELQRMIVTGVNYTDGPIAMRYPRGNGIGVPLMEEGWEPLPIGKGEILRNGDDLLILGYGTMVNTALQAAETLREHGIEATVVNARFVKPLDTELILPLAQRIGKVVTLEEGCLMGGFGSAVAEAFSDHNVLVPLKRFGVPDRLVDHATPDQSKADLGLTSPQIAEQILQVFFSNRQPSMVS.

Thiamine diphosphate-binding positions include His-72 and 113 to 115; that span reads GHA. Asp-144 is a binding site for Mg(2+). Thiamine diphosphate-binding positions include 145 to 146, Asn-174, Tyr-287, and Glu-370; that span reads GA. Asn-174 lines the Mg(2+) pocket.

It belongs to the transketolase family. DXPS subfamily. As to quaternary structure, homodimer. The cofactor is Mg(2+). Thiamine diphosphate is required as a cofactor.

The catalysed reaction is D-glyceraldehyde 3-phosphate + pyruvate + H(+) = 1-deoxy-D-xylulose 5-phosphate + CO2. It participates in metabolic intermediate biosynthesis; 1-deoxy-D-xylulose 5-phosphate biosynthesis; 1-deoxy-D-xylulose 5-phosphate from D-glyceraldehyde 3-phosphate and pyruvate: step 1/1. Its function is as follows. Catalyzes the acyloin condensation reaction between C atoms 2 and 3 of pyruvate and glyceraldehyde 3-phosphate to yield 1-deoxy-D-xylulose-5-phosphate (DXP). This chain is 1-deoxy-D-xylulose-5-phosphate synthase, found in Rippkaea orientalis (strain PCC 8801 / RF-1) (Cyanothece sp. (strain PCC 8801)).